Reading from the N-terminus, the 142-residue chain is Large ribosomal subunit protein uL13 (142 aa).

It belongs to the universal ribosomal protein uL13 family. Part of the 50S ribosomal subunit.

Functionally, this protein is one of the early assembly proteins of the 50S ribosomal subunit, although it is not seen to bind rRNA by itself. It is important during the early stages of 50S assembly. This is Large ribosomal subunit protein uL13 from Acinetobacter baumannii (strain AB0057).